The following is a 712-amino-acid chain: Ribosome-releasing factor 2, mitochondrial (712 aa).

Residues 1–28 constitute a mitochondrion transit peptide; it reads MQYSLLSAQLRCSRFLLRQQAPFINRCY. The tr-type G domain occupies 30–309; the sequence is DDIRNIGILA…AVNAYLPTPN (280 aa). GTP contacts are provided by residues 39–46, 103–107, and 157–160; these read AHIDAGKT, DTPGH, and NKMD.

Belongs to the TRAFAC class translation factor GTPase superfamily. Classic translation factor GTPase family. EF-G/EF-2 subfamily.

It localises to the mitochondrion. Functionally, mitochondrial GTPase that mediates the disassembly of ribosomes from messenger RNA at the termination of mitochondrial protein biosynthesis. Not involved in the GTP-dependent ribosomal translocation step during translation elongation. The sequence is that of Ribosome-releasing factor 2, mitochondrial from Drosophila virilis (Fruit fly).